The following is a 225-amino-acid chain: UPF0758 protein NMB1038 (225 aa).

The region spanning 102–224 (VLSDPDTVAD…VCSFRQLGLM (123 aa)) is the MPN domain. 3 residues coordinate Zn(2+): H173, H175, and D186. The JAMM motif signature appears at 173 to 186 (HNHPGGSPEPSQED).

Belongs to the UPF0758 family.

This chain is UPF0758 protein NMB1038, found in Neisseria meningitidis serogroup B (strain ATCC BAA-335 / MC58).